Here is a 461-residue protein sequence, read N- to C-terminus: Glucan endo-1,3-beta-glucosidase (461 aa).

An N-terminal signal peptide occupies residues 1-23 (MPLLILLMLLAAGAAGAESATPS). Glu123 acts as the Proton donor in catalysis. Glu265 acts as the Nucleophile in catalysis. Residues 350-375 (GASVAPTPSPNPSPNPSPKPAPSGGG) form a disordered region. Residues 356–370 (TPSPNPSPNPSPKPA) are compositionally biased toward pro residues. Cys378 and Cys439 are oxidised to a cystine.

Belongs to the glycosyl hydrolase 17 family. Post-translationally, contains two additional disulfide bonds.

It catalyses the reaction Hydrolysis of (1-&gt;3)-beta-D-glucosidic linkages in (1-&gt;3)-beta-D-glucans.. Functionally, is thought to be an important plant defense-related product against fungal pathogens. This is Glucan endo-1,3-beta-glucosidase (GLC1) from Triticum aestivum (Wheat).